The primary structure comprises 484 residues: Cobyric acid synthase (484 aa).

The GATase cobBQ-type domain occupies 249-438; sequence QLRVAVPVFT…LHGIFDRPET (190 aa). The active-site Nucleophile is the Cys330. His430 is a catalytic residue.

It belongs to the CobB/CobQ family. CobQ subfamily.

Its pathway is cofactor biosynthesis; adenosylcobalamin biosynthesis. In terms of biological role, catalyzes amidations at positions B, D, E, and G on adenosylcobyrinic A,C-diamide. NH(2) groups are provided by glutamine, and one molecule of ATP is hydrogenolyzed for each amidation. This is Cobyric acid synthase from Vibrio cholerae serotype O1 (strain ATCC 39541 / Classical Ogawa 395 / O395).